Here is a 697-residue protein sequence, read N- to C-terminus: Polyribonucleotide nucleotidyltransferase (697 aa).

Mg(2+) is bound by residues Asp488 and Asp494. The 60-residue stretch at 555-614 (PTLLTLKINPDKIRDVIGKGGATIRALTEETGCTIDIEDDGSVKIYGETREKADEAVRRV) folds into the KH domain. The S1 motif domain maps to 624-692 (GAIYEGKVTR…QRGRIKLSMK (69 aa)).

The protein belongs to the polyribonucleotide nucleotidyltransferase family. Component of the RNA degradosome, which is a multiprotein complex involved in RNA processing and mRNA degradation. Mg(2+) serves as cofactor.

Its subcellular location is the cytoplasm. It carries out the reaction RNA(n+1) + phosphate = RNA(n) + a ribonucleoside 5'-diphosphate. Its function is as follows. Involved in mRNA degradation. Catalyzes the phosphorolysis of single-stranded polyribonucleotides processively in the 3'- to 5'-direction. The polypeptide is Polyribonucleotide nucleotidyltransferase (Alcanivorax borkumensis (strain ATCC 700651 / DSM 11573 / NCIMB 13689 / SK2)).